The chain runs to 188 residues: Transcription antitermination protein NusB (188 aa).

The interval 154–188 (RAANPGAVSGSDAPVAPWDDSEELPAEDEAEDSRP) is disordered. The segment covering 172-188 (DDSEELPAEDEAEDSRP) has biased composition (acidic residues).

This sequence belongs to the NusB family.

Involved in transcription antitermination. Required for transcription of ribosomal RNA (rRNA) genes. Binds specifically to the boxA antiterminator sequence of the ribosomal RNA (rrn) operons. The sequence is that of Transcription antitermination protein NusB from Corynebacterium efficiens (strain DSM 44549 / YS-314 / AJ 12310 / JCM 11189 / NBRC 100395).